We begin with the raw amino-acid sequence, 262 residues long: Putative hydro-lyase ROP_32680 (262 aa).

This sequence belongs to the D-glutamate cyclase family.

The protein is Putative hydro-lyase ROP_32680 of Rhodococcus opacus (strain B4).